The primary structure comprises 183 residues: Ribulose bisphosphate carboxylase small subunit, chloroplastic (183 aa).

Residues 1–59 constitute a chloroplast transit peptide; sequence MASSMISSGTVATVSADRPAPAQARMVAPFNGLKSSSAFPVTRKSNDITSIASNGGRVQ.

It belongs to the RuBisCO small chain family. In terms of assembly, heterohexadecamer of 8 large and 8 small subunits.

The protein localises to the plastid. It localises to the chloroplast. RuBisCO catalyzes two reactions: the carboxylation of D-ribulose 1,5-bisphosphate, the primary event in carbon dioxide fixation, as well as the oxidative fragmentation of the pentose substrate. Both reactions occur simultaneously and in competition at the same active site. Although the small subunit is not catalytic it is essential for maximal activity. The chain is Ribulose bisphosphate carboxylase small subunit, chloroplastic from Pyrus pyrifolia (Chinese pear).